Here is a 220-residue protein sequence, read N- to C-terminus: Deoxyribose-phosphate aldolase (220 aa).

D89 functions as the Proton donor/acceptor in the catalytic mechanism. The Schiff-base intermediate with acetaldehyde role is filled by K151. The active-site Proton donor/acceptor is K180.

Belongs to the DeoC/FbaB aldolase family. DeoC type 1 subfamily.

It is found in the cytoplasm. The catalysed reaction is 2-deoxy-D-ribose 5-phosphate = D-glyceraldehyde 3-phosphate + acetaldehyde. Its pathway is carbohydrate degradation; 2-deoxy-D-ribose 1-phosphate degradation; D-glyceraldehyde 3-phosphate and acetaldehyde from 2-deoxy-alpha-D-ribose 1-phosphate: step 2/2. Functionally, catalyzes a reversible aldol reaction between acetaldehyde and D-glyceraldehyde 3-phosphate to generate 2-deoxy-D-ribose 5-phosphate. This is Deoxyribose-phosphate aldolase from Streptococcus pneumoniae (strain Hungary19A-6).